The sequence spans 299 residues: Probable lipid kinase YegS (299 aa).

A DAGKc domain is found at 2–133; that stretch reads ANFPASLLIL…IDMARVNDKT (132 aa). ATP is bound by residues Thr40, 66–72, and Thr95; that span reads GDGTINE. The Mg(2+) site is built by Leu215, Asp218, and Leu220. The Proton acceptor role is filled by Glu271.

It belongs to the diacylglycerol/lipid kinase family. YegS lipid kinase subfamily. Mg(2+) is required as a cofactor. It depends on Ca(2+) as a cofactor.

The protein localises to the cytoplasm. Functionally, probably phosphorylates lipids; the in vivo substrate is unknown. This Salmonella agona (strain SL483) protein is Probable lipid kinase YegS.